The sequence spans 715 residues: 1,4-alpha-glucan branching enzyme GlgB (715 aa).

The active-site Nucleophile is the D396. The Proton donor role is filled by E449.

The protein belongs to the glycosyl hydrolase 13 family. GlgB subfamily. As to quaternary structure, monomer.

The catalysed reaction is Transfers a segment of a (1-&gt;4)-alpha-D-glucan chain to a primary hydroxy group in a similar glucan chain.. It functions in the pathway glycan biosynthesis; glycogen biosynthesis. In terms of biological role, catalyzes the formation of the alpha-1,6-glucosidic linkages in glycogen by scission of a 1,4-alpha-linked oligosaccharide from growing alpha-1,4-glucan chains and the subsequent attachment of the oligosaccharide to the alpha-1,6 position. The sequence is that of 1,4-alpha-glucan branching enzyme GlgB from Aliivibrio fischeri (strain ATCC 700601 / ES114) (Vibrio fischeri).